Reading from the N-terminus, the 635-residue chain is Threonine--tRNA ligase (635 aa).

The region spanning 1–58 is the TGS domain; it reads MIRVICDNETFELPTGSTAADFASKIKNSHYFAGVVINDQIKDLSTTLSEGDVLKFVT. The segment at 237-528 is catalytic; that stretch reads DHRVLGTKLD…LIEHFKGRFP (292 aa). Positions 328, 379, and 505 each coordinate Zn(2+).

The protein belongs to the class-II aminoacyl-tRNA synthetase family. Homodimer. Zn(2+) is required as a cofactor.

The protein localises to the cytoplasm. It catalyses the reaction tRNA(Thr) + L-threonine + ATP = L-threonyl-tRNA(Thr) + AMP + diphosphate + H(+). Catalyzes the attachment of threonine to tRNA(Thr) in a two-step reaction: L-threonine is first activated by ATP to form Thr-AMP and then transferred to the acceptor end of tRNA(Thr). Also edits incorrectly charged L-seryl-tRNA(Thr). This Chlamydia felis (strain Fe/C-56) (Chlamydophila felis) protein is Threonine--tRNA ligase.